Here is a 349-residue protein sequence, read N- to C-terminus: Hypoxia-inducible factor 1-alpha inhibitor (349 aa).

Residues 1-10 (MAATAAEAVA) show a composition bias toward low complexity. The interval 1-51 (MAATAAEAVASGSGEPREEAGALGPAWDESQLRSYSFPTRPIPRLSQSDPR) is disordered. Residue Ala2 is modified to N-acetylalanine. The tract at residues 2-125 (AATAAEAVAS…PRSNREEMKF (124 aa)) is interaction with VHL. A JmjC domain is found at 142 to 312 (ERLYLQQTLN…PKRIEYPLKA (171 aa)). Tyr145 is a binding site for 2-oxoglutarate. Substrate contacts are provided by residues Asp152 and 181–183 (QLT). Thr196 provides a ligand contact to 2-oxoglutarate. Fe cation-binding residues include His199 and Asp201. 201–203 (DEQ) contacts substrate. 2-oxoglutarate is bound by residues Asn205 and Lys214. 238–239 (RQ) is a binding site for substrate. Residue His279 participates in Fe cation binding. Asn294 is a 2-oxoglutarate binding site. Substrate contacts are provided by Ala300 and Asn321.

Homodimer; homodimerization is essential for catalytic activity. Interacts with VHL and HIF1A. Part of a complex with VHL, HIF1A and HDAC1 or HDAC2 or HDAC3. Interacts with NFKB1 and NFKBIA. Interacts with NOTCH1, NOTCH2 and NOTCH3 but not with NOTCH4. Interacts with APBA3; binding inhibits HIF1AN binding to HIF1A. Interacts with TNKS2. Interacts with PPP1R12A. Interacts with ASB4. Interacts with UBE3A. Interacts with ANKS3. Interacts with NECAB3; the interaction is indirect and seems to be mediated by APBA3. Requires Fe(2+) as cofactor.

Its subcellular location is the nucleus. It localises to the cytoplasm. The protein localises to the perinuclear region. It carries out the reaction L-asparaginyl-[hypoxia-inducible factor alpha subunit] + 2-oxoglutarate + O2 = (3S)-3-hydroxy-L-asparaginyl-[hypoxia-inducible factor alpha subunit] + succinate + CO2. It catalyses the reaction L-histidyl-[ankyrin-repeat domain protein] + 2-oxoglutarate + O2 = (3S)-3-hydroxy-L-histidyl-[ankyrin-repeat domain protein] + succinate + CO2. The enzyme catalyses L-asparaginyl-[ankyrin-repeat domain protein] + 2-oxoglutarate + O2 = (3S)-3-hydroxy-L-asparaginyl-[ankyrin-repeat domain protein] + succinate + CO2. The catalysed reaction is L-aspartyl-[ankyrin-repeat domain protein] + 2-oxoglutarate + O2 = (3S)-3-hydroxy-L-aspartyl-[ankyrin-repeat domain protein] + succinate + CO2. In terms of biological role, hydroxylates HIF-1 alpha at 'Asn-803' in the C-terminal transactivation domain (CAD). Functions as an oxygen sensor and, under normoxic conditions, the hydroxylation prevents interaction of HIF-1 with transcriptional coactivators including Cbp/p300-interacting transactivator. Involved in transcriptional repression through interaction with HIF1A, VHL and histone deacetylases. Hydroxylates specific Asn residues within ankyrin repeat domains (ARD) of NFKB1, NFKBIA, NOTCH1, ASB4, PPP1R12A and several other ARD-containing proteins. Also hydroxylates Asp and His residues within ARDs of ANK1 and TNKS2, respectively. Negatively regulates NOTCH1 activity, accelerating myogenic differentiation. Positively regulates ASB4 activity, promoting vascular differentiation. This is Hypoxia-inducible factor 1-alpha inhibitor (HIF1AN) from Homo sapiens (Human).